The chain runs to 105 residues: uncharacterized protein (105 aa).

In terms of domain architecture, ABM spans 14–104; sequence HYITACLKII…VEWLMKSNVN (91 aa).

This is an uncharacterized protein from Bacillus subtilis (strain 168).